We begin with the raw amino-acid sequence, 383 residues long: D-alanine--D-alanine ligase (383 aa).

The ATP-grasp domain maps to 169–373 (KALLRAAGLP…YPQLVDRLVR (205 aa)). 196–251 (QERLGLPVFVKPARGGSSIGISRVEAWADLDTAIKAARASDPKVLVESAIVGREIE) is an ATP binding site. Asp327, Glu340, and Asn342 together coordinate Mg(2+).

The protein belongs to the D-alanine--D-alanine ligase family. Mg(2+) is required as a cofactor. It depends on Mn(2+) as a cofactor.

It localises to the cytoplasm. It catalyses the reaction 2 D-alanine + ATP = D-alanyl-D-alanine + ADP + phosphate + H(+). It functions in the pathway cell wall biogenesis; peptidoglycan biosynthesis. Cell wall formation. This Frankia casuarinae (strain DSM 45818 / CECT 9043 / HFP020203 / CcI3) protein is D-alanine--D-alanine ligase.